The following is a 298-amino-acid chain: Pheromone-regulated membrane protein 9 (298 aa).

Residues 1 to 111 are Cytoplasmic-facing; sequence MSPQYHFYFV…YWIYEVTRHK (111 aa). A helical membrane pass occupies residues 112 to 132; the sequence is AAVILLVLIVTSILLLVFFYN. Topologically, residues 133-137 are extracellular; that stretch reads TEFCV. Residues 138–158 traverse the membrane as a helical segment; sequence AFEILLFSFCFPGTCMVVIAF. The Cytoplasmic portion of the chain corresponds to 159 to 298; that stretch reads SEPIGDREFK…QEYPGVDEFF (140 aa). The segment at 235-262 is disordered; the sequence is SSASNVKDAQSNDETAGTPNEAAESSSF. Positions 297-298 are COPII binding; it reads FF.

The protein belongs to the DUP/COS family. In terms of assembly, interacts with PRM8. Binds to COPII coated vesicles.

It localises to the cell membrane. Functionally, may be involved in endoplasmic reticulum exit trafficking of proteins. The protein is Pheromone-regulated membrane protein 9 (PRM9) of Saccharomyces cerevisiae (strain ATCC 204508 / S288c) (Baker's yeast).